Reading from the N-terminus, the 416-residue chain is MEIAKKAEIIAVGSELLLGQIANTNAQFISKELAEIGVNVFYHTAVGDNPERLKQVIRIAEERSDLIIFSGGLGPTKDDLTKETIANTLGRPLVLNDEAFRSIEEYFAKTKRTMSPNNRKQALVIEGSDVLANHFGMAPGMLAEHGSRLYMLLPGPPSELRPMFENEAKPLLLKKLGSNEKIVSTVLRFFGIGESQLEADLEDIIDAQTNPTIAPLAADGEVTLRLTAKHADEKETERLLKETEAAILERVGEFFYGYDDTSLVKELSKACRQNGITISSAESFTGGLFSEWVTDLSGASQLFAGGVVCYSDSVKQHVLGVKAETLAESGAVSKECAKELAAGVRKLTGSDIGISFTGVAGPDPQEGHAPGRVFIGISAEGKEEVHEFNFAGSRTGIRKRAAKYGCHLILKMLDQK.

This sequence belongs to the CinA family.

The chain is Putative competence-damage inducible protein from Bacillus velezensis (strain DSM 23117 / BGSC 10A6 / LMG 26770 / FZB42) (Bacillus amyloliquefaciens subsp. plantarum).